The sequence spans 511 residues: Colicin-B (511 aa).

A TonB box motif is present at residues 17 to 24; that stretch reads DTMVVWPS. 2 consecutive transmembrane segments (helical) span residues 455-475 and 477-497; these read MASA…LIAF and LSAT…GAFI.

It belongs to the channel forming colicin family.

The protein localises to the cell membrane. In terms of biological role, this colicin is a channel-forming colicin. This class of transmembrane toxins depolarize the cytoplasmic membrane, leading to dissipation of cellular energy. Functionally, colicins are polypeptide toxins produced by and active against E.coli and closely related bacteria. This chain is Colicin-B (cba), found in Escherichia coli.